Here is a 398-residue protein sequence, read N- to C-terminus: Nuclear egress protein 2 (398 aa).

Topologically, residues 1–359 are perinuclear space; the sequence is MEMNKVLHQD…GPSRPQSGPW (359 aa). Disordered regions lie at residues 202–246 and 306–334; these read ALTR…PPPP and LEEH…SLER. The segment covering 215–224 has biased composition (pro residues); sequence ASPPPPPPRH. Phosphoserine is present on serine 216. Over residues 225–240 the composition is skewed to low complexity; the sequence is PSCSPTMVAAGGAAAG. The segment covering 311–323 has biased composition (basic residues); sequence SRRRGVSTHHRHP. A helical transmembrane segment spans residues 360 to 382; the sequence is LPARFATLGPLVLALLLVLALLW. Residues 383 to 398 lie on the Nuclear side of the membrane; it reads RGHGQSSSPTRSAHRD.

It belongs to the herpesviridae NEC2 protein family. In terms of assembly, forms a heterohexameric complex with NEC1. Interacts with host UBA7 and RNF170; this interaction promotes UBA7 proteasomal degradation. Post-translationally, phosphorylated. Phosphorylation by viral kinase UL97 at Ser-216 plays an important role for correct viral nuclear egress complex (NEC) localization.

It is found in the host nucleus inner membrane. Its function is as follows. Plays an essential role in virion nuclear egress, the first step of virion release from infected cell. Within the host nucleus, NEC1 interacts with the newly formed capsid through the vertexes and directs it to the inner nuclear membrane by associating with NEC2. Induces the budding of the capsid at the inner nuclear membrane as well as its envelopment into the perinuclear space. There, the NEC1/NEC2 complex promotes the fusion of the enveloped capsid with the outer nuclear membrane and the subsequent release of the viral capsid into the cytoplasm where it will reach the secondary budding sites in the host Golgi or trans-Golgi network. Inhibits host ISGylation and subsequent innate antiviral response by targeting host UBA7 for proteasomal degradation. This Homo sapiens (Human) protein is Nuclear egress protein 2.